We begin with the raw amino-acid sequence, 110 residues long: MKFVLLFGVLLVTLFSYSSAEMLDDFDQADEDELLSLIEKEEARKDCIPKHHECTSNKHGCCRGHLFKYECQCTTVVTQSREETERCFCGTPPHHKAAELVVGFGKKIFG.

The N-terminal stretch at 1-20 is a signal peptide; it reads MKFVLLFGVLLVTLFSYSSA. The propeptide occupies 21–44; it reads EMLDDFDQADEDELLSLIEKEEAR. Cystine bridges form between Cys47/Cys62, Cys54/Cys71, Cys61/Cys89, and Cys73/Cys87.

This sequence belongs to the neurotoxin 19 (CSTX) family. 03 subfamily. As to expression, expressed by the venom gland.

The protein localises to the secreted. The protein is U1-lycotoxin-Ls1cc of Lycosa singoriensis (Wolf spider).